A 310-amino-acid chain; its full sequence is Ribosomal RNA small subunit methyltransferase H (310 aa).

Residues Ala-32–His-34, Asp-51, Phe-84, Asp-102, and Gln-109 each bind S-adenosyl-L-methionine.

The protein belongs to the methyltransferase superfamily. RsmH family.

It is found in the cytoplasm. The enzyme catalyses cytidine(1402) in 16S rRNA + S-adenosyl-L-methionine = N(4)-methylcytidine(1402) in 16S rRNA + S-adenosyl-L-homocysteine + H(+). In terms of biological role, specifically methylates the N4 position of cytidine in position 1402 (C1402) of 16S rRNA. The sequence is that of Ribosomal RNA small subunit methyltransferase H from Campylobacter hominis (strain ATCC BAA-381 / DSM 21671 / CCUG 45161 / LMG 19568 / NCTC 13146 / CH001A).